A 108-amino-acid polypeptide reads, in one-letter code: Abscisic stress-ripening protein 3 (108 aa).

Disordered stretches follow at residues methionine 1–histidine 34 and phenylalanine 84–histidine 108. The span at asparagine 15–aspartate 24 shows a compositional bias: basic and acidic residues. Residues histidine 25–histidine 34 show a composition bias toward basic residues. A compositionally biased stretch (basic and acidic residues) spans alanine 95–histidine 108.

It belongs to the abscisic acid and water stress-induced protein family.

The protein is Abscisic stress-ripening protein 3 of Solanum lycopersicum (Tomato).